Consider the following 438-residue polypeptide: L-cysteine:1D-myo-inositol 2-amino-2-deoxy-alpha-D-glucopyranoside ligase (438 aa).

The tract at residues 1–27 is disordered; it reads MKSWSSRPVPELPGTGTAPRVHDTSTG. Cys44 contributes to the Zn(2+) binding site. Residues 44–47, Thr59, and 82–84 each bind L-cysteinyl-5'-AMP; these read CGIT and NVT. Positions 46–56 match the 'HIGH' region motif; the sequence is ITPYDATHMGH. The short motif at 208 to 213 is the 'ERGGDP' region element; it reads DHGGDP. Position 249 (Trp249) interacts with L-cysteinyl-5'-AMP. Cys253 serves as a coordination point for Zn(2+). 271-273 is an L-cysteinyl-5'-AMP binding site; it reads GSD. His278 lines the Zn(2+) pocket. Residue Val304 coordinates L-cysteinyl-5'-AMP. The short motif at 310–314 is the 'KMSKS' region element; that stretch reads KMSKS.

The protein belongs to the class-I aminoacyl-tRNA synthetase family. MshC subfamily. As to quaternary structure, monomer. It depends on Zn(2+) as a cofactor.

The catalysed reaction is 1D-myo-inositol 2-amino-2-deoxy-alpha-D-glucopyranoside + L-cysteine + ATP = 1D-myo-inositol 2-(L-cysteinylamino)-2-deoxy-alpha-D-glucopyranoside + AMP + diphosphate + H(+). Functionally, catalyzes the ATP-dependent condensation of GlcN-Ins and L-cysteine to form L-Cys-GlcN-Ins. The polypeptide is L-cysteine:1D-myo-inositol 2-amino-2-deoxy-alpha-D-glucopyranoside ligase (Kocuria rhizophila (strain ATCC 9341 / DSM 348 / NBRC 103217 / DC2201)).